A 261-amino-acid chain; its full sequence is Eukaryotic translation initiation factor 3 subunit G (261 aa).

Residues 156-180 (QDADSKNALGLRGDGRQMERNRSDE) form a disordered region. A compositionally biased stretch (basic and acidic residues) spans 168 to 180 (GDGRQMERNRSDE). Residues 181–259 (NTCRVTNLPQ…MVLKVEWTRP (79 aa)) enclose the RRM domain.

Belongs to the eIF-3 subunit G family. Component of the eukaryotic translation initiation factor 3 (eIF-3) complex.

Its subcellular location is the cytoplasm. Its function is as follows. RNA-binding component of the eukaryotic translation initiation factor 3 (eIF-3) complex, which is involved in protein synthesis of a specialized repertoire of mRNAs and, together with other initiation factors, stimulates binding of mRNA and methionyl-tRNAi to the 40S ribosome. The eIF-3 complex specifically targets and initiates translation of a subset of mRNAs involved in cell proliferation. This subunit can bind 18S rRNA. This Caenorhabditis briggsae protein is Eukaryotic translation initiation factor 3 subunit G.